The primary structure comprises 969 residues: Levansucrase (969 aa).

The first 52 residues, 1-52 (MDITVNSQSNTVAPKQAECKKMRYSIRKVATVGATSALVGTLAFLGATQVKA), serve as a signal peptide directing secretion. Low complexity predominate over residues 89 to 103 (SEAVESSVAHSEVAT). Positions 89 to 169 (SEAVESSVAH…STASSEAADT (81 aa)) are disordered. Polar residues predominate over residues 106-116 (VTETQPSNTTP). Low complexity predominate over residues 124-166 (SSTVVTSSSDATTPSATVAAVSAPAHTSEAAVEAPTSTASSEA). W286, D287, and S356 together coordinate sucrose. Residue D287 is the Nucleophile of the active site. Residue D443 coordinates Ca(2+). 2 residues coordinate sucrose: R448 and D449. Ca(2+) contacts are provided by Q473, N512, and D544. E545 contributes to the sucrose binding site. E547 (proton donor/acceptor) is an active-site residue. Residue R565 coordinates sucrose. Disordered regions lie at residues 746–843 (VKDG…VGDR) and 860–934 (IVAT…SEGS). A compositionally biased stretch (basic and acidic residues) spans 747 to 758 (KDGKDKKADKPE). Positions 776 to 789 (KPGTSKPADNNQPS) are enriched in polar residues. Positions 872–910 (VKEESVTETEAPKPVKSEEKVQSHGVDKANEVTKSDESS) are enriched in basic and acidic residues. Residues 924–934 (TPKTPSDSEGS) are compositionally biased toward polar residues. A helical membrane pass occupies residues 938–958 (ILSILATIFAAIASLALLGYG).

Belongs to the glycosyl hydrolase 68 family.

Its subcellular location is the cell membrane. The protein resides in the cell surface. The enzyme catalyses [6)-beta-D-fructofuranosyl-(2-&gt;](n) alpha-D-glucopyranoside + sucrose = [6)-beta-D-fructofuranosyl-(2-&gt;](n+1) alpha-D-glucopyranoside + D-glucose. With respect to regulation, ca(2+) may play an important structural role and promote stability of levansucrase. Functionally, catalyzes the synthesis of levan, a fructose polymer, by transferring the fructosyl moiety from sucrose to a growing acceptor molecule. Also displays sucrose hydrolase activity. This Streptococcus salivarius protein is Levansucrase.